A 413-amino-acid chain; its full sequence is ATP phosphoribosyltransferase regulatory subunit (413 aa).

The interval 1 to 21 is disordered; the sequence is MRSRAARKFSTTPGTRDVLPP.

Belongs to the class-II aminoacyl-tRNA synthetase family. HisZ subfamily. As to quaternary structure, heteromultimer composed of HisG and HisZ subunits.

The protein localises to the cytoplasm. It participates in amino-acid biosynthesis; L-histidine biosynthesis; L-histidine from 5-phospho-alpha-D-ribose 1-diphosphate: step 1/9. Its function is as follows. Required for the first step of histidine biosynthesis. May allow the feedback regulation of ATP phosphoribosyltransferase activity by histidine. This chain is ATP phosphoribosyltransferase regulatory subunit, found in Rubrobacter xylanophilus (strain DSM 9941 / JCM 11954 / NBRC 16129 / PRD-1).